Here is a 431-residue protein sequence, read N- to C-terminus: Glucose-1-phosphate adenylyltransferase (431 aa).

Beta-D-fructose 1,6-bisphosphate is bound at residue lysine 39. AMP is bound by residues arginine 40, histidine 46, and arginine 52. Residue tyrosine 114 coordinates alpha-D-glucose 1-phosphate. Arginine 130 is an AMP binding site. Alpha-D-glucose 1-phosphate is bound by residues glycine 179, 194-195, and serine 212; that span reads EK. AMP contacts are provided by glutamate 370 and arginine 386. Residues 419 to 423 and 429 to 431 contribute to the beta-D-fructose 1,6-bisphosphate site; these read REMLR and QER.

The protein belongs to the bacterial/plant glucose-1-phosphate adenylyltransferase family. In terms of assembly, homotetramer.

The enzyme catalyses alpha-D-glucose 1-phosphate + ATP + H(+) = ADP-alpha-D-glucose + diphosphate. The protein operates within glycan biosynthesis; glycogen biosynthesis. With respect to regulation, allosterically activated by fructose-1,6-bisphosphate (F16BP) and inhibited by AMP. Involved in the biosynthesis of ADP-glucose, a building block required for the elongation reactions to produce glycogen. Catalyzes the reaction between ATP and alpha-D-glucose 1-phosphate (G1P) to produce pyrophosphate and ADP-Glc. In Salmonella dublin (strain CT_02021853), this protein is Glucose-1-phosphate adenylyltransferase.